Consider the following 250-residue polypeptide: PTB-containing, cubilin and LRP1-interacting protein (250 aa).

One can recognise a PID domain in the interval 93–250; sequence VTYLGKVSTT…VSQELESDDG (158 aa). Residues 229-250 are disordered; it reads DGRIHSNSSSEEVSQELESDDG. Phosphoserine occurs at positions 236 and 247. Acidic residues predominate over residues 241 to 250; it reads VSQELESDDG.

Found in a complex with PID1/PCLI1, LRP1 and CUBNI. Interacts with LRP1 and CUBN. Expressed in subcutaneous fat, heart, skeletal muscle, brain, colon, thymus, spleen, kidney, liver, small intestine, placenta, lung and peripheral blood leukocyte.

The protein localises to the cytoplasm. Its function is as follows. Increases proliferation of preadipocytes without affecting adipocytic differentiation. The protein is PTB-containing, cubilin and LRP1-interacting protein (PID1) of Homo sapiens (Human).